The primary structure comprises 757 residues: 5-methyltetrahydropteroyltriglutamate--homocysteine methyltransferase (757 aa).

5-methyltetrahydropteroyltri-L-glutamate is bound by residues 17-20 (RELK) and K117. L-homocysteine-binding positions include 432 to 434 (IGS) and E485. L-methionine contacts are provided by residues 432-434 (IGS) and E485. Residues 516–517 (RC) and W562 each bind 5-methyltetrahydropteroyltri-L-glutamate. D600 contributes to the L-homocysteine binding site. D600 provides a ligand contact to L-methionine. Position 606 (E606) interacts with 5-methyltetrahydropteroyltri-L-glutamate. H642, C644, and E666 together coordinate Zn(2+). H695 acts as the Proton donor in catalysis. Residue C727 coordinates Zn(2+).

This sequence belongs to the vitamin-B12 independent methionine synthase family. The cofactor is Zn(2+).

It catalyses the reaction 5-methyltetrahydropteroyltri-L-glutamate + L-homocysteine = tetrahydropteroyltri-L-glutamate + L-methionine. It participates in amino-acid biosynthesis; L-methionine biosynthesis via de novo pathway; L-methionine from L-homocysteine (MetE route): step 1/1. Its function is as follows. Catalyzes the transfer of a methyl group from 5-methyltetrahydrofolate to homocysteine resulting in methionine formation. In Erwinia tasmaniensis (strain DSM 17950 / CFBP 7177 / CIP 109463 / NCPPB 4357 / Et1/99), this protein is 5-methyltetrahydropteroyltriglutamate--homocysteine methyltransferase.